The following is a 126-amino-acid chain: Large ribosomal subunit protein bL20c (126 aa).

It belongs to the bacterial ribosomal protein bL20 family.

The protein localises to the plastid. Its subcellular location is the chloroplast. Binds directly to 23S ribosomal RNA and is necessary for the in vitro assembly process of the 50S ribosomal subunit. It is not involved in the protein synthesizing functions of that subunit. In Lactuca sativa (Garden lettuce), this protein is Large ribosomal subunit protein bL20c.